An 883-amino-acid chain; its full sequence is Phosphoenolpyruvate carboxylase (883 aa).

Residues His-138 and Lys-546 contribute to the active site.

Belongs to the PEPCase type 1 family. It depends on Mg(2+) as a cofactor.

It carries out the reaction oxaloacetate + phosphate = phosphoenolpyruvate + hydrogencarbonate. Its function is as follows. Forms oxaloacetate, a four-carbon dicarboxylic acid source for the tricarboxylic acid cycle. The sequence is that of Phosphoenolpyruvate carboxylase from Salmonella paratyphi A (strain ATCC 9150 / SARB42).